The chain runs to 2462 residues: Non-reducing polyketide synthase ausA (2462 aa).

The tract at residues 16 to 253 (VFFGPVYPEL…HTADHIPAMK (238 aa)) is N-terminal acylcarrier protein transacylase domain (SAT). Residues 385–801 (SAPIAVTGFA…GSNAVIVVKE (417 aa)) enclose the Ketosynthase family 3 (KS3) domain. Catalysis depends on for beta-ketoacyl synthase activity residues Cys-550, His-685, and His-724. The interval 904 to 1208 (LCFGGQTGDT…LPIDLQESTA (305 aa)) is malonyl-CoA:ACP transacylase (MAT) domain. Ser-991 acts as the For acyl/malonyl transferase activity in catalysis. The N-terminal hotdog fold stretch occupies residues 1274–1403 (HDDGLLQLVE…GKVLLDPQAA (130 aa)). Positions 1274–1581 (HDDGLLQLVE…FTSVSIQSLK (308 aa)) constitute a PKS/mFAS DH domain. Positions 1277-1580 (GLLQLVERDA…TFTSVSIQSL (304 aa)) are product template (PT) domain. Residue His-1307 is the Proton acceptor; for dehydratase activity of the active site. The C-terminal hotdog fold stretch occupies residues 1431 to 1581 (SSNGLKRATV…FTSVSIQSLK (151 aa)). Asp-1489 serves as the catalytic Proton donor; for dehydratase activity. A Carrier domain is found at 1613 to 1690 (VSDDHHLRAV…GLAHRISPSS (78 aa)). Ser-1650 bears the O-(pantetheine 4'-phosphoryl)serine mark. Residues 1850–2083 (QHASEHKLLR…GFNWVDWTDN (234 aa)) are methyltransferase (CMeT) domain. The segment at 2112-2462 (TPARVETVRY…YEFLRQHVAV (351 aa)) is thioesterase (TE) domain. Active-site for thioesterase activity residues include Ser-2235, Asp-2398, and His-2430.

The catalysed reaction is 3 malonyl-CoA + acetyl-CoA + 2 S-adenosyl-L-methionine = 3,5-dimethylorsellinate + 2 S-adenosyl-L-homocysteine + 3 CO2 + 4 CoA. It functions in the pathway secondary metabolite biosynthesis; terpenoid biosynthesis. Its function is as follows. Non-reducing polyketide synthase; part of the gene cluster that mediates the biosynthesis of calidodehydroaustin, a fungal meroterpenoid. The first step of the pathway is the synthesis of 3,5-dimethylorsellinic acid by the polyketide synthase ausA. 3,5-dimethylorsellinic acid is then prenylated by the polyprenyl transferase ausN. Further epoxidation by the FAD-dependent monooxygenase ausM and cyclization by the probable terpene cyclase ausL lead to the formation of protoaustinoid A. Protoaustinoid A is then oxidized to spiro-lactone preaustinoid A3 by the combined action of the FAD-binding monooxygenases ausB and ausC, and the dioxygenase ausE. Acid-catalyzed keto-rearrangement and ring contraction of the tetraketide portion of preaustinoid A3 by ausJ lead to the formation of preaustinoid A4. The aldo-keto reductase ausK, with the help of ausH, is involved in the next step by transforming preaustinoid A4 into isoaustinone which is in turn hydroxylated by the P450 monooxygenase ausI to form austinolide. The cytochrome P450 monooxygenase ausG modifies austinolide to austinol. Austinol is further acetylated to austin by the O-acetyltransferase ausP, which spontaneously changes to dehydroaustin. The cytochrome P450 monooxygenase ausR then converts dehydroaustin is into 7-dehydrodehydroaustin. The hydroxylation catalyzed by ausR permits the O-acetyltransferase ausQ to add an additional acetyl group to the molecule, leading to the formation of acetoxydehydroaustin. The short chain dehydrogenase ausT catalyzes the reduction of the double bond present between carbon atoms 1 and 2 to convert 7-dehydrodehydroaustin into 1,2-dihydro-7-hydroxydehydroaustin. AusQ catalyzes not only an acetylation reaction but also the addition of the PKS ausV diketide product to 1,2-dihydro-7-hydroxydehydroaustin, forming precalidodehydroaustin. Finally, the iron/alpha-ketoglutarate-dependent dioxygenase converts precalidodehydroaustin into calidodehydroaustin. This chain is Non-reducing polyketide synthase ausA, found in Aspergillus calidoustus.